A 364-amino-acid polypeptide reads, in one-letter code: Probable methyltransferase ICS2 (364 aa).

Residues Tyr18, Cys61, Asp98, Leu99, Ser133, and Phe134 each coordinate S-adenosyl-L-homocysteine. Residues Asn172, Asp258, Phe260, and Asn261 each coordinate Mg(2+).

This sequence belongs to the methyltransferase superfamily. Type-7 methyltransferase family. It depends on Mg(2+) as a cofactor.

No detectable N-methyltransferase activity. The sequence is that of Probable methyltransferase ICS2 from Camellia irrawadiensis (Burmese tea).